The following is a 300-amino-acid chain: Transcription initiation factor IIB (300 aa).

The segment at 2–34 (NKQKVCPACESAELIYDPERGEIVCAKCGYVIE) adopts a TFIIB-type zinc-finger fold. Residues Cys-7, Cys-10, Cys-26, and Cys-29 each contribute to the Zn(2+) site. 2 consecutive repeat copies span residues 114–197 (SELD…ARNL) and 210–291 (DYVN…ELVE).

This sequence belongs to the TFIIB family.

Stabilizes TBP binding to an archaeal box-A promoter. Also responsible for recruiting RNA polymerase II to the pre-initiation complex (DNA-TBP-TFIIB). This Pyrococcus furiosus (strain ATCC 43587 / DSM 3638 / JCM 8422 / Vc1) protein is Transcription initiation factor IIB.